A 703-amino-acid chain; its full sequence is Putative glycosyl hydrolase ecdE (703 aa).

The N-terminal stretch at methionine 1–alanine 21 is a signal peptide. Aspartate 47 is a catalytic residue. N-linked (GlcNAc...) asparagine glycans are attached at residues asparagine 104, asparagine 120, asparagine 293, asparagine 397, asparagine 443, and asparagine 641.

This sequence belongs to the glycosyl hydrolase 32 family.

This Aspergillus rugulosus (Emericella rugulosa) protein is Putative glycosyl hydrolase ecdE.